The primary structure comprises 313 residues: Formate-nitrite transporter (313 aa).

Residues 1–46 lie on the Cytoplasmic side of the membrane; it reads MTKGSKYTIDPISVKTACTSEESYIRCVEYGKGKAHYPNLSLLAKA. A helical transmembrane segment spans residues 47-67; sequence ILAGVFVGVCAHASGIAGGHF. The Extracellular segment spans residues 68-77; the sequence is YYHKLREHVG. The helical transmembrane segment at 78–98 threads the bilayer; sequence ISMSAFVYGFTFPIAFLCIIA. Residues 99-127 are Cytoplasmic-facing; sequence TGSDLFTGNTLAVTTALLQRKVTLLEYLR. A helical membrane pass occupies residues 128-148; sequence VMSISLFGNYVGAVSFAFFVS. The Extracellular segment spans residues 149–184; sequence HLSGAFKKHEEIGKNHIFQFLNDIAEKKVSHTFVQC. A helical transmembrane segment spans residues 185-205; sequence VCLAIGCNIFVCLAVYFVLTI. The Cytoplasmic portion of the chain corresponds to 206 to 210; the sequence is KDGSG. Residues 211-231 form a helical membrane-spanning segment; it reads MVFSVFFAVYAFAIAGYEHII. The Extracellular portion of the chain corresponds to 232–256; sequence ANMYTLNLALMIEANVDWTKVYVDN. A helical transmembrane segment spans residues 257 to 277; the sequence is LLPTLIGNYIAGAIVLACPLF. Residues 278–313 are Cytoplasmic-facing; that stretch reads YIYRHSYSDYEKTRGDGGNSGLKSLSIEMQNGSSGR. The tract at residues 290-313 is disordered; the sequence is TRGDGGNSGLKSLSIEMQNGSSGR. Residues 298 to 313 show a composition bias toward polar residues; the sequence is GLKSLSIEMQNGSSGR.

It belongs to the FNT transporter (TC 1.A.16) family. As to quaternary structure, homopentamer.

It is found in the cell membrane. Its subcellular location is the vacuole membrane. It catalyses the reaction (S)-lactate(in) + H(+)(in) = (S)-lactate(out) + H(+)(out). It carries out the reaction formate(in) + H(+)(in) = formate(out) + H(+)(out). The catalysed reaction is pyruvate(out) + H(+)(out) = pyruvate(in) + H(+)(in). The enzyme catalyses acetate(out) + H(+)(out) = acetate(in) + H(+)(in). Its activity is regulated as follows. Inhibited by the Malaria Box compound MMV007839 and its derivatives BH296 and BH267.meta. Functionally, monocarboxylate-proton symporter that mediates the efflux of the waste product lactate in the intraerythrocytic parasites; active in acidic-to-neutral pH range. Transports L-lactate. The sequence is that of Formate-nitrite transporter from Plasmodium vivax.